The following is a 345-amino-acid chain: Phosphoribosylformylglycinamidine cyclo-ligase (345 aa).

The protein belongs to the AIR synthase family. Homodimer.

It is found in the cytoplasm. It catalyses the reaction 2-formamido-N(1)-(5-O-phospho-beta-D-ribosyl)acetamidine + ATP = 5-amino-1-(5-phospho-beta-D-ribosyl)imidazole + ADP + phosphate + H(+). It functions in the pathway purine metabolism; IMP biosynthesis via de novo pathway; 5-amino-1-(5-phospho-D-ribosyl)imidazole from N(2)-formyl-N(1)-(5-phospho-D-ribosyl)glycinamide: step 2/2. The sequence is that of Phosphoribosylformylglycinamidine cyclo-ligase from Escherichia coli O157:H7.